The chain runs to 274 residues: NADPH-dependent 7-cyano-7-deazaguanine reductase (274 aa).

Residues 1–33 (MPKKDALDHLSLGQHTDYPNEYDPKQLQPVPRS) are disordered. Residue 84–86 (IES) coordinates substrate. 86–87 (SK) contributes to the NADPH binding site. Residue C183 is the Thioimide intermediate of the active site. The active-site Proton donor is D190. Position 222-223 (222-223 (HE)) interacts with substrate. Residue 250 to 251 (RG) participates in NADPH binding.

This sequence belongs to the GTP cyclohydrolase I family. QueF type 2 subfamily. Homodimer.

It localises to the cytoplasm. It carries out the reaction 7-aminomethyl-7-carbaguanine + 2 NADP(+) = 7-cyano-7-deazaguanine + 2 NADPH + 3 H(+). The protein operates within tRNA modification; tRNA-queuosine biosynthesis. Its function is as follows. Catalyzes the NADPH-dependent reduction of 7-cyano-7-deazaguanine (preQ0) to 7-aminomethyl-7-deazaguanine (preQ1). The protein is NADPH-dependent 7-cyano-7-deazaguanine reductase of Idiomarina loihiensis (strain ATCC BAA-735 / DSM 15497 / L2-TR).